Here is a 309-residue protein sequence, read N- to C-terminus: Genome polyprotein (309 aa).

Topologically, residues 1 to 40 (GFADLMGYIPLVGAPLGGAARALAHGVRVLEDGVNYATGN) are cytoplasmic. Residues 36-39 (YATG) form an important for lipid droplets localization region. The helical transmembrane segment at 41–61 (LPGCSFSIFLLALLSCLTVPA) threads the bilayer. Positions 50-63 (LLALLSCLTVPASA) are cleaved as a propeptide — ER anchor for the core protein, removed in mature form by host signal peptidase. The Lumenal segment spans residues 62–230 (SAYQVRNSSG…AGAHWGVLAG (169 aa)). Asparagine 68, asparagine 81, and asparagine 106 each carry an N-linked (GlcNAc...) asparagine; by host glycan. Residues 137–168 (LVGSATLCSALYVGDLCGSVFLVGQLFTFSPR) are important for fusion. Residue asparagine 177 is glycosylated (N-linked (GlcNAc...) asparagine; by host). Residues 231–251 (IAYFSMVGNWAKVLVVLLLFA) traverse the membrane as a helical segment. The Lumenal portion of the chain corresponds to 252–309 (GVDATTYTTGGNAARTTQALTSFFSPGAKQDIQLINTNGSWHINRTALNCNASLDTGW). The segment at 256–282 (TTYTTGGNAARTTQALTSFFSPGAKQD) is HVR1. N-linked (GlcNAc...) (high mannose) asparagine; by host glycans are attached at residues asparagine 289, asparagine 295, and asparagine 302.

Belongs to the hepacivirus polyprotein family. In terms of assembly, homooligomer. Interacts with E1 (via C-terminus). Interacts with the non-structural protein 5A. Interacts (via N-terminus) with host STAT1 (via SH2 domain); this interaction results in decreased STAT1 phosphorylation and ubiquitin-mediated proteasome-dependent STAT1 degradation, leading to decreased IFN-stimulated gene transcription. Interacts with host STAT3; this interaction constitutively activates STAT3. Interacts with host LTBR receptor. Interacts with host TNFRSF1A receptor and possibly induces apoptosis. Interacts with host HNRPK. Interacts with host YWHAE. Interacts with host UBE3A/E6AP. Interacts with host DDX3X. Interacts with host APOA2. Interacts with host RXRA protein. Interacts with host SP110 isoform 3/Sp110b; this interaction sequesters the transcriptional corepressor SP110 away from the nucleus. Interacts with host CREB3 nuclear transcription protein; this interaction triggers cell transformation. Interacts with host ACY3. Interacts with host C1QR1. Interacts with host RBM24; this interaction, which enhances the interaction of the mature core protein with 5'-UTR, may inhibit viral translation and favor replication. Interacts with host EIF2AK2/PKR; this interaction induces the autophosphorylation of EIF2AK2. Part of the viral assembly initiation complex composed of NS2, E1, E2, NS3, NS4A, NS5A and the mature core protein. Forms a heterodimer with envelope glycoprotein E2. Interacts with mature core protein. Interacts with protease NS2. The heterodimer E1/E2 interacts with host CLDN1; this interaction plays a role in viral entry into host cell. Interacts with host SPSB2 (via C-terminus). Part of the viral assembly initiation complex composed of NS2, E1, E2, NS3, NS4A, NS5A and the mature core protein. As to quaternary structure, forms a heterodimer with envelope glycoprotein E1. Interacts with host CD81 and SCARB1 receptors; these interactions play a role in viral entry into host cell. Interacts with host EIF2AK2/PKR; this interaction inhibits EIF2AK2 and probably allows the virus to evade the innate immune response. Interacts with host CD209/DC-SIGN and CLEC4M/DC-SIGNR. Interact with host SPCS1; this interaction is essential for viral particle assembly. Interacts with protease NS2. The heterodimer E1/E2 interacts with host CLDN1; this interaction plays a role in viral entry into host cell. Part of the viral assembly initiation complex composed of NS2, E1, E2, NS3, NS4A, NS5A and the mature core protein. Post-translationally, specific enzymatic cleavages in vivo yield mature proteins. The structural proteins, core, E1, E2 and p7 are produced by proteolytic processing by host signal peptidases. The core protein precursor is synthesized as a 23 kDa, which is retained in the ER membrane through the hydrophobic signal peptide. Cleavage by the signal peptidase releases the 21 kDa mature core protein. The cleavage of the core protein precursor occurs between aminoacids 176 and 188 but the exact cleavage site is not known. Some degraded forms of the core protein appear as well during the course of infection. The other proteins (p7, NS2, NS3, NS4A, NS4B, NS5A and NS5B) are cleaved by the viral proteases. Autoprocessing between NS2 and NS3 is mediated by the NS2 cysteine protease catalytic domain and regulated by the NS3 N-terminal domain. Phosphorylated by host PKC and PKA. In terms of processing, ubiquitinated; mediated by UBE3A and leading to core protein subsequent proteasomal degradation. Post-translationally, highly N-glycosylated.

Its subcellular location is the host endoplasmic reticulum membrane. It localises to the host mitochondrion membrane. It is found in the virion. The protein localises to the host cytoplasm. The protein resides in the host nucleus. Its subcellular location is the host lipid droplet. It localises to the virion membrane. In terms of biological role, packages viral RNA to form a viral nucleocapsid, and promotes virion budding. Participates in the viral particle production as a result of its interaction with the non-structural protein 5A. Binds RNA and may function as a RNA chaperone to induce the RNA structural rearrangements taking place during virus replication. Modulates viral translation initiation by interacting with viral IRES and 40S ribosomal subunit. Affects various cell signaling pathways, host immunity and lipid metabolism. Prevents the establishment of cellular antiviral state by blocking the interferon-alpha/beta (IFN-alpha/beta) and IFN-gamma signaling pathways and by blocking the formation of phosphorylated STAT1 and promoting ubiquitin-mediated proteasome-dependent degradation of STAT1. Activates STAT3 leading to cellular transformation. Regulates the activity of cellular genes, including c-myc and c-fos. May repress the promoter of p53, and sequester CREB3 and SP110 isoform 3/Sp110b in the cytoplasm. Represses cell cycle negative regulating factor CDKN1A, thereby interrupting an important check point of normal cell cycle regulation. Targets transcription factors involved in the regulation of inflammatory responses and in the immune response: suppresses TNF-induced NF-kappa-B activation, and activates AP-1. Binds to dendritic cells (DCs) via C1QR1, resulting in down-regulation of T-lymphocytes proliferation. Alters lipid metabolism by interacting with hepatocellular proteins involved in lipid accumulation and storage. Induces up-regulation of FAS promoter activity, and thereby contributes to the increased triglyceride accumulation in hepatocytes (steatosis). Forms a heterodimer with envelope glycoprotein E2, which mediates virus attachment to the host cell, virion internalization through clathrin-dependent endocytosis and fusion with host membrane. Fusion with the host cell is most likely mediated by both E1 and E2, through conformational rearrangements of the heterodimer required for fusion rather than a classical class II fusion mechanism. E1/E2 heterodimer binds host apolipoproteins such as APOB and ApoE thereby forming a lipo-viro-particle (LVP). APOE associated to the LVP allows the initial virus attachment to cell surface receptors such as the heparan sulfate proteoglycans (HSPGs), syndecan-1 (SDC1), syndecan-1 (SDC2), the low-density lipoprotein receptor (LDLR) and scavenger receptor class B type I (SCARB1). The cholesterol transfer activity of SCARB1 allows E2 exposure and binding of E2 to SCARB1 and the tetraspanin CD81. E1/E2 heterodimer binding on CD81 activates the epithelial growth factor receptor (EGFR) signaling pathway. Diffusion of the complex E1-E2-EGFR-SCARB1-CD81 to the cell lateral membrane allows further interaction with Claudin 1 (CLDN1) and occludin (OCLN) to finally trigger HCV entry. Its function is as follows. Forms a heterodimer with envelope glycoprotein E1, which mediates virus attachment to the host cell, virion internalization through clathrin-dependent endocytosis and fusion with host membrane. Fusion with the host cell is most likely mediated by both E1 and E2, through conformational rearrangements of the heterodimer required for fusion rather than a classical class II fusion mechanism. The interaction between envelope glycoprotein E2 and host apolipoprotein E/APOE allows the proper assembly, maturation and infectivity of the viral particles. This interaction is probably promoted via the up-regulation of cellular autophagy by the virus. E1/E2 heterodimer binds host apolipoproteins such as APOB and APOE thereby forming a lipo-viro-particle (LVP). APOE associated to the LVP allows the initial virus attachment to cell surface receptors such as the heparan sulfate proteoglycans (HSPGs), syndecan-1 (SDC1), syndecan-1 (SDC2), the low-density lipoprotein receptor (LDLR) and scavenger receptor class B type I (SCARB1). The cholesterol transfer activity of SCARB1 allows E2 exposure and binding of E2 to SCARB1 and the tetraspanin CD81. E1/E2 heterodimer binding on CD81 activates the epithelial growth factor receptor (EGFR) signaling pathway. Diffusion of the complex E1-E2-EGFR-SCARB1-CD81 to the cell lateral membrane allows further interaction with Claudin 1 (CLDN1) and occludin (OCLN) to finally trigger HCV entry. Inhibits host EIF2AK2/PKR activation, preventing the establishment of an antiviral state. Viral ligand for CD209/DC-SIGN and CLEC4M/DC-SIGNR, which are respectively found on dendritic cells (DCs), and on liver sinusoidal endothelial cells and macrophage-like cells of lymph node sinuses. These interactions allow the capture of circulating HCV particles by these cells and subsequent facilitated transmission to permissive cells such as hepatocytes and lymphocyte subpopulations. This chain is Genome polyprotein, found in Hepatitis C virus (isolate HCT27) (HCV).